An 831-amino-acid chain; its full sequence is Translation initiation factor IF-2 (831 aa).

A tr-type G domain is found at 329-499 (TRAPVVTVMG…LLISEMQDLK (171 aa)). The G1 stretch occupies residues 338-345 (GHVDHGKT). 338–345 (GHVDHGKT) serves as a coordination point for GTP. The segment at 363 to 367 (GITQH) is G2. The tract at residues 385–388 (DTPG) is G3. GTP-binding positions include 385 to 389 (DTPGH) and 439 to 442 (NKID). Positions 439 to 442 (NKID) are G4. The interval 475-477 (SAL) is G5.

It belongs to the TRAFAC class translation factor GTPase superfamily. Classic translation factor GTPase family. IF-2 subfamily.

Its subcellular location is the cytoplasm. One of the essential components for the initiation of protein synthesis. Protects formylmethionyl-tRNA from spontaneous hydrolysis and promotes its binding to the 30S ribosomal subunits. Also involved in the hydrolysis of GTP during the formation of the 70S ribosomal complex. This chain is Translation initiation factor IF-2 (infB), found in Rickettsia prowazekii (strain Madrid E).